A 415-amino-acid polypeptide reads, in one-letter code: Gamma-glutamyl phosphate reductase (415 aa).

Belongs to the gamma-glutamyl phosphate reductase family.

The protein resides in the cytoplasm. The catalysed reaction is L-glutamate 5-semialdehyde + phosphate + NADP(+) = L-glutamyl 5-phosphate + NADPH + H(+). It participates in amino-acid biosynthesis; L-proline biosynthesis; L-glutamate 5-semialdehyde from L-glutamate: step 2/2. Functionally, catalyzes the NADPH-dependent reduction of L-glutamate 5-phosphate into L-glutamate 5-semialdehyde and phosphate. The product spontaneously undergoes cyclization to form 1-pyrroline-5-carboxylate. The chain is Gamma-glutamyl phosphate reductase from Dictyoglomus turgidum (strain DSM 6724 / Z-1310).